The chain runs to 27 residues: Caerulein precursor fragment R5 (27 aa).

As to expression, expressed by the skin glands.

It is found in the secreted. In terms of biological role, antimicrobial peptide. The polypeptide is Caerulein precursor fragment R5 (Xenopus ruwenzoriensis (Uganda clawed frog)).